The following is a 750-amino-acid chain: Glutamate carboxypeptidase 2 (750 aa).

At 1-19 (MWNLLHETDSAVATARRPR) the chain is on the cytoplasmic side. A Phosphoserine modification is found at serine 10. A helical; Signal-anchor for type II membrane protein membrane pass occupies residues 20–43 (WLCAGALVLAGGFFLLGFLFGWFI). Residues 44–750 (KSSNEATNIT…AAAETLSEVA (707 aa)) lie on the Extracellular side of the membrane. Residues asparagine 51, asparagine 76, asparagine 121, asparagine 140, asparagine 153, and asparagine 195 are each glycosylated (N-linked (GlcNAc...) asparagine). Positions 210 and 257 each coordinate substrate. Ca(2+) is bound by residues threonine 269 and tyrosine 272. Positions 274–587 (ANEYAYRRGI…QVRGGMVFEL (314 aa)) are NAALADase. The N-linked (GlcNAc...) asparagine glycan is linked to asparagine 336. Histidine 377 and aspartate 387 together coordinate Zn(2+). Substrate is bound at residue glutamate 424. Catalysis depends on glutamate 424, which acts as the Nucleophile; for NAALADase activity. Zn(2+) is bound at residue glutamate 425. 2 residues coordinate Ca(2+): glutamate 433 and glutamate 436. Aspartate 453 serves as a coordination point for Zn(2+). 2 N-linked (GlcNAc...) asparagine glycosylation sites follow: asparagine 459 and asparagine 476. Substrate is bound by residues 517 to 518 (SG), asparagine 519, 534 to 536 (RAR), tyrosine 552, and 552 to 553 (YH). A Zn(2+)-binding site is contributed by histidine 553. Residue serine 628 is the Charge relay system of the active site. An N-linked (GlcNAc...) asparagine glycan is attached at asparagine 638. Residues aspartate 666 and histidine 689 each act as charge relay system in the active site. A substrate-binding site is contributed by 699 to 700 (KY).

The protein belongs to the peptidase M28 family. M28B subfamily. As to quaternary structure, homodimer. Zn(2+) serves as cofactor. Post-translationally, the first two amino acids at the N-terminus of isoform PSMA' appear to be cleaved by limited proteolysis. In terms of processing, the N-terminus is blocked. In terms of tissue distribution, highly expressed in prostate epithelium. Detected in urinary bladder, kidney, testis, ovary, fallopian tube, breast, adrenal gland, liver, esophagus, stomach, small intestine, colon and brain (at protein level). Detected in the small intestine, brain, kidney, liver, spleen, colon, trachea, spinal cord and the capillary endothelium of a variety of tumors. Expressed specifically in jejunum brush border membranes. In the brain, highly expressed in the ventral striatum and brain stem. Also expressed in fetal liver and kidney. Isoform PSMA' is the most abundant form in normal prostate. Isoform PSMA-1 is the most abundant form in primary prostate tumors. Isoform PSMA-9 is specifically expressed in prostate cancer.

It is found in the cell membrane. It localises to the cytoplasm. The catalysed reaction is Release of an unsubstituted, C-terminal glutamyl residue, typically from Ac-Asp-Glu or folylpoly-gamma-glutamates.. The NAALADase activity is inhibited by beta-NAAG, quisqualic acid, 2-(phosphonomethyl) pentanedioic acid (PMPA) and EDTA. Activated by cobalt. Has both folate hydrolase and N-acetylated-alpha-linked-acidic dipeptidase (NAALADase) activity. Has a preference for tri-alpha-glutamate peptides. In the intestine, required for the uptake of folate. In the brain, modulates excitatory neurotransmission through the hydrolysis of the neuropeptide, N-aceylaspartylglutamate (NAAG), thereby releasing glutamate. Involved in prostate tumor progression. Functionally, also exhibits a dipeptidyl-peptidase IV type activity. In vitro, cleaves Gly-Pro-AMC. The polypeptide is Glutamate carboxypeptidase 2 (Homo sapiens (Human)).